The primary structure comprises 410 residues: Probable peptidoglycan glycosyltransferase FtsW (410 aa).

9 consecutive transmembrane segments (helical) span residues 39–59, 78–98, 108–128, 177–197, 198–218, 221–241, 303–323, 342–362, and 374–394; these read LDPL…VMVY, YFLL…LAAF, FAPW…IPGV, GFLP…GEPD, FGAF…GGIN, VFAL…WLSP, IAEE…AILI, GLVA…NMGV, and LPLM…LAIL.

The protein belongs to the SEDS family. FtsW subfamily.

The protein resides in the cell inner membrane. It carries out the reaction [GlcNAc-(1-&gt;4)-Mur2Ac(oyl-L-Ala-gamma-D-Glu-L-Lys-D-Ala-D-Ala)](n)-di-trans,octa-cis-undecaprenyl diphosphate + beta-D-GlcNAc-(1-&gt;4)-Mur2Ac(oyl-L-Ala-gamma-D-Glu-L-Lys-D-Ala-D-Ala)-di-trans,octa-cis-undecaprenyl diphosphate = [GlcNAc-(1-&gt;4)-Mur2Ac(oyl-L-Ala-gamma-D-Glu-L-Lys-D-Ala-D-Ala)](n+1)-di-trans,octa-cis-undecaprenyl diphosphate + di-trans,octa-cis-undecaprenyl diphosphate + H(+). It participates in cell wall biogenesis; peptidoglycan biosynthesis. Its function is as follows. Peptidoglycan polymerase that is essential for cell division. This is Probable peptidoglycan glycosyltransferase FtsW from Aromatoleum aromaticum (strain DSM 19018 / LMG 30748 / EbN1) (Azoarcus sp. (strain EbN1)).